Reading from the N-terminus, the 244-residue chain is Geranylgeranylglyceryl phosphate synthase (244 aa).

Mg(2+)-binding residues include aspartate 21 and threonine 50. Sn-glycerol 1-phosphate-binding positions include 168 to 174 (YLEAGSG), 200 to 201 (GG), and 222 to 223 (GN).

The protein belongs to the GGGP/HepGP synthase family. Group II subfamily. Requires Mg(2+) as cofactor.

It localises to the cytoplasm. The catalysed reaction is sn-glycerol 1-phosphate + (2E,6E,10E)-geranylgeranyl diphosphate = sn-3-O-(geranylgeranyl)glycerol 1-phosphate + diphosphate. Its pathway is membrane lipid metabolism; glycerophospholipid metabolism. In terms of biological role, prenyltransferase that catalyzes the transfer of the geranylgeranyl moiety of geranylgeranyl diphosphate (GGPP) to the C3 hydroxyl of sn-glycerol-1-phosphate (G1P). This reaction is the first ether-bond-formation step in the biosynthesis of archaeal membrane lipids. The polypeptide is Geranylgeranylglyceryl phosphate synthase (Sulfurisphaera tokodaii (strain DSM 16993 / JCM 10545 / NBRC 100140 / 7) (Sulfolobus tokodaii)).